The primary structure comprises 260 residues: Aspartate/glutamate leucyltransferase (260 aa).

A compositionally biased stretch (basic and acidic residues) spans 241–251 (DRLPEEGDRGP). The segment at 241-260 (DRLPEEGDRGPARFPASLTE) is disordered.

It belongs to the R-transferase family. Bpt subfamily.

The protein localises to the cytoplasm. It catalyses the reaction N-terminal L-glutamyl-[protein] + L-leucyl-tRNA(Leu) = N-terminal L-leucyl-L-glutamyl-[protein] + tRNA(Leu) + H(+). The catalysed reaction is N-terminal L-aspartyl-[protein] + L-leucyl-tRNA(Leu) = N-terminal L-leucyl-L-aspartyl-[protein] + tRNA(Leu) + H(+). Functions in the N-end rule pathway of protein degradation where it conjugates Leu from its aminoacyl-tRNA to the N-termini of proteins containing an N-terminal aspartate or glutamate. In Gluconacetobacter diazotrophicus (strain ATCC 49037 / DSM 5601 / CCUG 37298 / CIP 103539 / LMG 7603 / PAl5), this protein is Aspartate/glutamate leucyltransferase.